The chain runs to 411 residues: MMP alpha-(1-&gt;4)-mannosyltransferase (411 aa).

It belongs to the glycosyltransferase group 1 family. Glycosyltransferase 4 subfamily.

It carries out the reaction [3-O-methyl-alpha-D-mannosyl-(1-&gt;4)](n)-3-O-methyl-D-mannose + GDP-alpha-D-mannose = alpha-D-mannosyl-(1-&gt;4)-[3-O-methyl-alpha-D-mannosyl-(1-&gt;4)](n)-3-O-methyl-D-mannose + GDP + H(+). The catalysed reaction is [3-O-methyl-alpha-D-mannosyl-(1-&gt;4)](n)-1-O,3-O-dimethyl-alpha-D-mannose + GDP-alpha-D-mannose = alpha-D-mannosyl-(1-&gt;4)-[3-O-methyl-alpha-D-mannosyl-(1-&gt;4)](n)-1-O,3-O-dimethyl-alpha-D-mannose + GDP + H(+). With respect to regulation, activity is significantly enhanced in the presence of Mg(2+). Functionally, glycosyltransferase involved in the biosynthesis of 3-O-methylmannose polysaccharides (MMP), which are intracellular polymethylated polysaccharides implicated in the modulation of fatty acid metabolism in non-tuberculous mycobacteria. Highly specific alpha-(1-&gt;4)-mannosyltransferase that can transfer mannose units from GDP-mannose to a wide range of alpha-(1-&gt;4) oligomannosides longer than three mannoses, including all hydrolytic products of MmpH. Can use synthetic trimannosides and tetramannosides as substrates, but not mono- and disaccharides, and is significantly more active with the methylated substrates, preferring the tetramannosides over the trimannosides. This chain is MMP alpha-(1-&gt;4)-mannosyltransferase, found in Mycolicibacterium hassiacum (strain DSM 44199 / CIP 105218 / JCM 12690 / 3849) (Mycobacterium hassiacum).